We begin with the raw amino-acid sequence, 308 residues long: ADP-L-glycero-D-manno-heptose-6-epimerase (308 aa).

NADP(+) contacts are provided by residues 10–11 (MI), 31–32 (DN), lysine 38, lysine 53, 75–79 (EGACS), and asparagine 92. Tyrosine 140 functions as the Proton acceptor in the catalytic mechanism. Position 144 (lysine 144) interacts with NADP(+). Asparagine 169 serves as a coordination point for substrate. Residues valine 170 and lysine 178 each coordinate NADP(+). The active-site Proton acceptor is the lysine 178. Substrate is bound by residues serine 180, histidine 187, 201–204 (FEGS), arginine 209, and tyrosine 272.

Belongs to the NAD(P)-dependent epimerase/dehydratase family. HldD subfamily. In terms of assembly, homopentamer. The cofactor is NADP(+).

The enzyme catalyses ADP-D-glycero-beta-D-manno-heptose = ADP-L-glycero-beta-D-manno-heptose. It functions in the pathway nucleotide-sugar biosynthesis; ADP-L-glycero-beta-D-manno-heptose biosynthesis; ADP-L-glycero-beta-D-manno-heptose from D-glycero-beta-D-manno-heptose 7-phosphate: step 4/4. Functionally, catalyzes the interconversion between ADP-D-glycero-beta-D-manno-heptose and ADP-L-glycero-beta-D-manno-heptose via an epimerization at carbon 6 of the heptose. The protein is ADP-L-glycero-D-manno-heptose-6-epimerase of Actinobacillus pleuropneumoniae serotype 7 (strain AP76).